The primary structure comprises 284 residues: D-tagatose-1,6-bisphosphate aldolase subunit GatY (284 aa).

The active-site Proton donor is D82. Zn(2+) is bound by residues H83 and H180. G181 provides a ligand contact to dihydroxyacetone phosphate. Position 208 (H208) interacts with Zn(2+). Dihydroxyacetone phosphate contacts are provided by residues 209–211 (GAS) and 230–233 (NVAT).

The protein belongs to the class II fructose-bisphosphate aldolase family. TagBP aldolase GatY subfamily. Forms a complex with GatZ. Zn(2+) serves as cofactor.

The catalysed reaction is D-tagatofuranose 1,6-bisphosphate = D-glyceraldehyde 3-phosphate + dihydroxyacetone phosphate. Its pathway is carbohydrate metabolism; D-tagatose 6-phosphate degradation; D-glyceraldehyde 3-phosphate and glycerone phosphate from D-tagatose 6-phosphate: step 2/2. In terms of biological role, catalytic subunit of the tagatose-1,6-bisphosphate aldolase GatYZ, which catalyzes the reversible aldol condensation of dihydroxyacetone phosphate (DHAP or glycerone-phosphate) with glyceraldehyde 3-phosphate (G3P) to produce tagatose 1,6-bisphosphate (TBP). Requires GatZ subunit for full activity and stability. Is involved in the catabolism of galactitol. This chain is D-tagatose-1,6-bisphosphate aldolase subunit GatY, found in Klebsiella pneumoniae subsp. pneumoniae (strain ATCC 700721 / MGH 78578).